The following is a 341-amino-acid chain: tRNA N6-adenosine threonylcarbamoyltransferase (341 aa).

Fe cation contacts are provided by H115 and H119. Substrate-binding positions include 137–141 (IVSGG), D170, G183, D187, and N276. D304 is a Fe cation binding site.

It belongs to the KAE1 / TsaD family. Fe(2+) serves as cofactor.

The protein resides in the cytoplasm. It carries out the reaction L-threonylcarbamoyladenylate + adenosine(37) in tRNA = N(6)-L-threonylcarbamoyladenosine(37) in tRNA + AMP + H(+). Functionally, required for the formation of a threonylcarbamoyl group on adenosine at position 37 (t(6)A37) in tRNAs that read codons beginning with adenine. Is involved in the transfer of the threonylcarbamoyl moiety of threonylcarbamoyl-AMP (TC-AMP) to the N6 group of A37, together with TsaE and TsaB. TsaD likely plays a direct catalytic role in this reaction. The protein is tRNA N6-adenosine threonylcarbamoyltransferase of Staphylococcus aureus (strain bovine RF122 / ET3-1).